The primary structure comprises 1006 residues: Pentatricopeptide repeat-containing protein At1g30610, chloroplastic (1006 aa).

The transit peptide at 1–40 (MAVTISTNAFVNASLLDESRNSFWRPLFHQPYYNCRRVVR) directs the protein to the chloroplast. Disordered regions lie at residues 180 to 219 (LSKS…ERGS) and 248 to 292 (SSVA…IARG). Basic and acidic residues predominate over residues 194 to 219 (ESFRKRYSKQEYHRSSDTSRGIERGS). The segment covering 254–263 (WSNSGESSVT) has biased composition (polar residues). Over residues 265-284 (PKDESFRRRYSKQEHHRSSD) the composition is skewed to basic and acidic residues. PPR repeat units lie at residues 468–502 (TDYT…DRYK), 506–536 (IRII…MLLQ), 542–572 (DMVA…MRSP), 592–626 (DVVV…GQKP), 627–657 (SPVT…MQKS), 661–695 (NALA…GIVG), 759–789 (LVVT…MKKV), 793–827 (NLVT…GNHI), 840–874 (DTYT…GYHF), and 875–909 (NAKR…NRIP).

The protein belongs to the PPR family. P subfamily.

It localises to the plastid. The protein localises to the chloroplast. May play a role in embryogenesis. This chain is Pentatricopeptide repeat-containing protein At1g30610, chloroplastic (EMB2279), found in Arabidopsis thaliana (Mouse-ear cress).